Reading from the N-terminus, the 454-residue chain is Phosphoglucosamine mutase (454 aa).

Residue S101 is the Phosphoserine intermediate of the active site. Residues S101, D243, D245, and D247 each coordinate Mg(2+). S101 carries the post-translational modification Phosphoserine.

Belongs to the phosphohexose mutase family. It depends on Mg(2+) as a cofactor. Activated by phosphorylation.

The enzyme catalyses alpha-D-glucosamine 1-phosphate = D-glucosamine 6-phosphate. Functionally, catalyzes the conversion of glucosamine-6-phosphate to glucosamine-1-phosphate. This is Phosphoglucosamine mutase from Citrifermentans bemidjiense (strain ATCC BAA-1014 / DSM 16622 / JCM 12645 / Bem) (Geobacter bemidjiensis).